The following is a 71-amino-acid chain: Large ribosomal subunit protein bL31 (71 aa).

Zn(2+) contacts are provided by cysteine 16, cysteine 18, cysteine 37, and cysteine 40.

Belongs to the bacterial ribosomal protein bL31 family. Type A subfamily. Part of the 50S ribosomal subunit. Zn(2+) is required as a cofactor.

In terms of biological role, binds the 23S rRNA. The chain is Large ribosomal subunit protein bL31 from Serratia proteamaculans (strain 568).